The chain runs to 326 residues: MRPELALVPGEPAGIGPELCVRLVQQPREDCRLLAFADPDTLRAAAAALNLPLQLLPEGAEARVPGDLRLRVVANATPSRFGQADPANAGAVIGALLGAGQACLSGELHGVVTGPVHKAVINEGGIAYSGTTELLADQAGVKVVMMLANHIVRVALATTHLPLREVADAITAPSLEHTLRTVHAALRREFGLPAPRIAVLGLNPHAGEDGHLGREELDLVIPLLQRLRAEGMDLIGPLPADTAFLPAKLAGFDTVLAMYHDQGLPVLKYSGFEQAVNLTLGLPYPRVAVDHGTALDLAGRGVADPSSLQAATTLCAQLARQRTLSA.

T132 serves as a coordination point for substrate. A divalent metal cation contacts are provided by H160, H205, and H260. Substrate-binding residues include K268, N277, and R286.

The protein belongs to the PdxA family. As to quaternary structure, homodimer. It depends on Zn(2+) as a cofactor. Mg(2+) is required as a cofactor. Co(2+) serves as cofactor.

Its subcellular location is the cytoplasm. The catalysed reaction is 4-(phosphooxy)-L-threonine + NAD(+) = 3-amino-2-oxopropyl phosphate + CO2 + NADH. It participates in cofactor biosynthesis; pyridoxine 5'-phosphate biosynthesis; pyridoxine 5'-phosphate from D-erythrose 4-phosphate: step 4/5. In terms of biological role, catalyzes the NAD(P)-dependent oxidation of 4-(phosphooxy)-L-threonine (HTP) into 2-amino-3-oxo-4-(phosphooxy)butyric acid which spontaneously decarboxylates to form 3-amino-2-oxopropyl phosphate (AHAP). The protein is 4-hydroxythreonine-4-phosphate dehydrogenase of Stenotrophomonas maltophilia (strain K279a).